The sequence spans 453 residues: Cytochrome P450 monooxygenase CYP2 (453 aa).

The chain crosses the membrane as a helical span at residues 13-29; it reads MVITMLHGSSTYSLLAS. N85 is a glycosylation site (N-linked (GlcNAc...) asparagine). A heme-binding site is contributed by C397.

It belongs to the cytochrome P450 family. Heme serves as cofactor.

It localises to the membrane. It functions in the pathway secondary metabolite biosynthesis. Cytochrome P450 monooxygenase; part of the gene cluster that mediates the biosynthesis of a tyrosine-derived cytochalasan acting as a fungal signal recognized by resistant rice plants and leads to avirulence in Pi33 resistant rice cultivars. The first step in the pathway is catalyzed by the hybrid PKS-NRPS ACE1, assisted by the enoyl reductase RAP1, that are responsible for fusion of the tyrosine precursor and the polyketide backbone. The polyketide synthase module (PKS) of ACE1 is responsible for the synthesis of the polyketide backbone and the downstream nonribosomal peptide synthetase (NRPS) amidates the carboxyl end of the polyketide with the tyrosine precursor. Because ACE1 lacks a designated enoylreductase (ER) domain, the required activity is provided the enoyl reductase RAP1. Reduction by the hydrolyase ORFZ, followed by dehydration and intra-molecular Diels-Alder cyclization by the Diels-Alderase ORF3 then yield the required isoindolone-fused macrocycle. A number of oxidative steps catalyzed by the tailoring enzymes identified within the cluster, including cytochrome P450 monooxygenases CYP1 to CYP4, the FAD-linked oxidoreductase OXR2 and the short-chain dehydrogenase/reductase OXR1, are further required to afford the final cytochalasans that confer avirulence and which have still to be identified. The monooxygenase CYP1 has been shown to be a site-selective C-18 hydroxylase whereas the function of CYP3 is the site-selective epoxidation of the C-6/C-7 olefin that is present in some intermediate compounds. Finally, SYN2 and RAP2 are not required for avirulence in Pi33 resistant rice cultivars. This is Cytochrome P450 monooxygenase CYP2 from Pyricularia oryzae (strain 70-15 / ATCC MYA-4617 / FGSC 8958) (Rice blast fungus).